Here is a 476-residue protein sequence, read N- to C-terminus: Serine/threonine-protein kinase PknF (476 aa).

Residues T8 and T13 each carry the phosphothreonine; by autocatalysis modification. Positions 12–279 constitute a Protein kinase domain; it reads FTIVRQLGSG…FARALGHRLG (268 aa). ATP contacts are provided by residues 18–26 and K41; that span reads LGSGGMGEV. The active-site Proton acceptor is D137. 3 positions are modified to phosphothreonine; by autocatalysis: T173, T175, and T287. S290 is modified (phosphoserine; by autocatalysis). The disordered stretch occupies residues 332–376; it reads ADDERAAQPARTRTTTSAGTTTSVAPASTTRPAPTTPTTTGAADT. The span at 338 to 376 shows a compositional bias: low complexity; it reads AQPARTRTTTSAGTTTSVAPASTTRPAPTTPTTTGAADT.

Belongs to the protein kinase superfamily. Ser/Thr protein kinase family. In terms of processing, dephosphorylated by PstP.

The catalysed reaction is L-seryl-[protein] + ATP = O-phospho-L-seryl-[protein] + ADP + H(+). The enzyme catalyses L-threonyl-[protein] + ATP = O-phospho-L-threonyl-[protein] + ADP + H(+). This chain is Serine/threonine-protein kinase PknF (pknF), found in Mycobacterium bovis (strain ATCC BAA-935 / AF2122/97).